Reading from the N-terminus, the 414-residue chain is Serine hydroxymethyltransferase (414 aa).

Residues Leu-118 and 122–124 (GHL) each bind (6S)-5,6,7,8-tetrahydrofolate. Lys-227 carries the post-translational modification N6-(pyridoxal phosphate)lysine. (6S)-5,6,7,8-tetrahydrofolate-binding positions include Glu-240 and 350–352 (SPF).

It belongs to the SHMT family. In terms of assembly, homodimer. It depends on pyridoxal 5'-phosphate as a cofactor.

It is found in the cytoplasm. The catalysed reaction is (6R)-5,10-methylene-5,6,7,8-tetrahydrofolate + glycine + H2O = (6S)-5,6,7,8-tetrahydrofolate + L-serine. Its pathway is one-carbon metabolism; tetrahydrofolate interconversion. It functions in the pathway amino-acid biosynthesis; glycine biosynthesis; glycine from L-serine: step 1/1. In terms of biological role, catalyzes the reversible interconversion of serine and glycine with tetrahydrofolate (THF) serving as the one-carbon carrier. This reaction serves as the major source of one-carbon groups required for the biosynthesis of purines, thymidylate, methionine, and other important biomolecules. Also exhibits THF-independent aldolase activity toward beta-hydroxyamino acids, producing glycine and aldehydes, via a retro-aldol mechanism. The sequence is that of Serine hydroxymethyltransferase from Bacillus cereus (strain ZK / E33L).